The sequence spans 339 residues: Glycerol-3-phosphate dehydrogenase [NAD(P)+] (339 aa).

Positions 15, 16, 36, and 110 each coordinate NADPH. Sn-glycerol 3-phosphate contacts are provided by K110, G139, and T141. Position 143 (A143) interacts with NADPH. Sn-glycerol 3-phosphate-binding residues include K195, D248, S258, R259, and N260. Residue K195 is the Proton acceptor of the active site. R259 contributes to the NADPH binding site. Residues V283 and E285 each contribute to the NADPH site.

It belongs to the NAD-dependent glycerol-3-phosphate dehydrogenase family.

The protein localises to the cytoplasm. It catalyses the reaction sn-glycerol 3-phosphate + NAD(+) = dihydroxyacetone phosphate + NADH + H(+). The catalysed reaction is sn-glycerol 3-phosphate + NADP(+) = dihydroxyacetone phosphate + NADPH + H(+). It functions in the pathway membrane lipid metabolism; glycerophospholipid metabolism. Its function is as follows. Catalyzes the reduction of the glycolytic intermediate dihydroxyacetone phosphate (DHAP) to sn-glycerol 3-phosphate (G3P), the key precursor for phospholipid synthesis. The protein is Glycerol-3-phosphate dehydrogenase [NAD(P)+] of Serratia proteamaculans (strain 568).